The following is a 461-amino-acid chain: Serine--tRNA ligase (461 aa).

Residues 112 to 134 form a disordered region; it reads EVPFGRDENDNREHHTFGEKPRF. Basic and acidic residues predominate over residues 114-134; sequence PFGRDENDNREHHTFGEKPRF. Position 252-254 (252-254) interacts with L-serine; it reads TAE. 283–285 is a binding site for ATP; it reads RAE. Residue Glu306 coordinates L-serine. 370-373 is a binding site for ATP; that stretch reads EISS. Position 406 (Ser406) interacts with L-serine.

The protein belongs to the class-II aminoacyl-tRNA synthetase family. Type-1 seryl-tRNA synthetase subfamily. As to quaternary structure, homodimer. The tRNA molecule binds across the dimer.

The protein resides in the cytoplasm. The catalysed reaction is tRNA(Ser) + L-serine + ATP = L-seryl-tRNA(Ser) + AMP + diphosphate + H(+). The enzyme catalyses tRNA(Sec) + L-serine + ATP = L-seryl-tRNA(Sec) + AMP + diphosphate + H(+). The protein operates within aminoacyl-tRNA biosynthesis; selenocysteinyl-tRNA(Sec) biosynthesis; L-seryl-tRNA(Sec) from L-serine and tRNA(Sec): step 1/1. Its function is as follows. Catalyzes the attachment of serine to tRNA(Ser). Is also able to aminoacylate tRNA(Sec) with serine, to form the misacylated tRNA L-seryl-tRNA(Sec), which will be further converted into selenocysteinyl-tRNA(Sec). This chain is Serine--tRNA ligase, found in Methylocella silvestris (strain DSM 15510 / CIP 108128 / LMG 27833 / NCIMB 13906 / BL2).